Reading from the N-terminus, the 390-residue chain is Flap endonuclease 1-2 (390 aa).

The segment at Met1–Lys108 is N-domain. Asp34 serves as a coordination point for Mg(2+). Position 74 (Arg74) interacts with DNA. Residues Asp90, Glu162, Glu164, Asp183, and Asp185 each contribute to the Mg(2+) site. The tract at residues Gln126–Tyr254 is I-domain. Glu162 contributes to the DNA binding site. DNA is bound by residues Gly232 and Asp234. Position 234 (Asp234) interacts with Mg(2+). Residues Phe348–Phe356 form an interaction with PCNA region. A disordered region spans residues Thr359–Ile390.

The protein belongs to the XPG/RAD2 endonuclease family. FEN1 subfamily. As to quaternary structure, interacts with PCNA. Three molecules of FEN1 bind to one PCNA trimer with each molecule binding to one PCNA monomer. PCNA stimulates the nuclease activity without altering cleavage specificity. It depends on Mg(2+) as a cofactor. Phosphorylated. Phosphorylation upon DNA damage induces relocalization to the nuclear plasma.

The protein localises to the nucleus. It localises to the nucleolus. The protein resides in the nucleoplasm. Its subcellular location is the mitochondrion. Its function is as follows. Structure-specific nuclease with 5'-flap endonuclease and 5'-3' exonuclease activities involved in DNA replication and repair. During DNA replication, cleaves the 5'-overhanging flap structure that is generated by displacement synthesis when DNA polymerase encounters the 5'-end of a downstream Okazaki fragment. It enters the flap from the 5'-end and then tracks to cleave the flap base, leaving a nick for ligation. Also involved in the long patch base excision repair (LP-BER) pathway, by cleaving within the apurinic/apyrimidinic (AP) site-terminated flap. Acts as a genome stabilization factor that prevents flaps from equilibrating into structures that lead to duplications and deletions. Also possesses 5'-3' exonuclease activity on nicked or gapped double-stranded DNA, and exhibits RNase H activity. Also involved in replication and repair of rDNA and in repairing mitochondrial DNA. The polypeptide is Flap endonuclease 1-2 (Paramecium tetraurelia).